Consider the following 148-residue polypeptide: Macrodomain Ter protein (148 aa).

Belongs to the MatP family. Homodimer.

The protein localises to the cytoplasm. In terms of biological role, required for spatial organization of the terminus region of the chromosome (Ter macrodomain) during the cell cycle. Prevents early segregation of duplicated Ter macrodomains during cell division. Binds specifically to matS, which is a 13 bp signature motif repeated within the Ter macrodomain. This Pasteurella multocida (strain Pm70) protein is Macrodomain Ter protein.